We begin with the raw amino-acid sequence, 171 residues long: Shikimate kinase (171 aa).

Position 14-19 (14-19 (GAGKST)) interacts with ATP. A Mg(2+)-binding site is contributed by serine 18. Residues aspartate 36, arginine 60, and glycine 82 each coordinate substrate. Position 120 (arginine 120) interacts with ATP. Arginine 139 contributes to the substrate binding site. Glutamine 156 serves as a coordination point for ATP.

It belongs to the shikimate kinase family. Monomer. The cofactor is Mg(2+).

The protein localises to the cytoplasm. It catalyses the reaction shikimate + ATP = 3-phosphoshikimate + ADP + H(+). It functions in the pathway metabolic intermediate biosynthesis; chorismate biosynthesis; chorismate from D-erythrose 4-phosphate and phosphoenolpyruvate: step 5/7. In terms of biological role, catalyzes the specific phosphorylation of the 3-hydroxyl group of shikimic acid using ATP as a cosubstrate. The sequence is that of Shikimate kinase from Shewanella frigidimarina (strain NCIMB 400).